We begin with the raw amino-acid sequence, 328 residues long: Twinfilin (328 aa).

One can recognise an ADF-H 1 domain in the interval 1–137; sequence MSASVELKPT…DYQQIMKSLS (137 aa). At S143 the chain carries Phosphoserine. The region spanning 173 to 304 is the ADF-H 2 domain; it reads GVAMSIDDKA…TEKEILHAAG (132 aa). The segment at 302–328 is disordered; it reads AAGISSPQAETSTTKTGFSRPRPPRRR. Polar residues predominate over residues 306 to 318; it reads SSPQAETSTTKTG.

This sequence belongs to the actin-binding proteins ADF family. Twinfilin subfamily. As to quaternary structure, interacts with G-actin; ADP-actin form.

The protein localises to the cytoplasm. The protein resides in the cytoskeleton. Actin-binding protein involved in motile and morphological processes. Inhibits actin polymerization, likely by sequestering G-actin. Prevents actin filament assembly by forming a 1:1 complex with actin monomers, and inhibits the nucleotide exchange reaction of actin monomers. In Schizosaccharomyces pombe (strain 972 / ATCC 24843) (Fission yeast), this protein is Twinfilin (twf1).